The primary structure comprises 452 residues: MDNLSERFNVLQENLMDIYESGQEDIETQIKHWQLLRQEQVLFYYARKNGVMRVGYQPVPPLATSEAKAKDAIGMVLLLQSLQKSPYGKEPWTLTQTSLETVRSPPANCFKKGPQNIEVMFDNDPENLMSYTVWSFIYYQNLDDTWNKVEGRVDYHGAYYMEGSLKVYYIQFEVDAARFGKTGRWEVHVNEDTIFAPVTSSSPAAGEGTDASPINAASRSSPARGLSATSVSTRTTQRTSPRRYRRKASSPTATTTRHKRQDIRRSRSTSRGRQAISRGGERRQRRRERSYSRDSSRSPNRGRGGSSGGPTTRSQSRSLSRSRSRSRSRSRGSSAGGGVAPEQVGKSVRSVGRNPGGRLTRLLEEARDPPVILLRGEANKLKCFRYRAKKRYGSLVKYYSTTWSWVGANTNDRIGRSRMLLAFNTYDERELFIQKMKLPPGVDWSLGHLDDL.

The tract at residues 1–201 is transactivation domain; the sequence is MDNLSERFNV…DTIFAPVTSS (201 aa). The disordered stretch occupies residues 198–356; that stretch reads VTSSSPAAGE…SVRSVGRNPG (159 aa). Over residues 227-239 the composition is skewed to low complexity; it reads SATSVSTRTTQRT. Basic residues predominate over residues 256 to 270; that stretch reads TRHKRQDIRRSRSTS. Residues 309-319 are compositionally biased toward low complexity; that stretch reads GPTTRSQSRSL. Positions 320–330 are enriched in basic residues; sequence SRSRSRSRSRS. The tract at residues 368 to 452 is DNA-binding domain; it reads DPPVILLRGE…DWSLGHLDDL (85 aa).

It belongs to the papillomaviridae E2 protein family. Binds DNA as homodimer. Interacts with protein E1; this interaction greatly increases E1 DNA-binding activity. Interacts with protein L1; this interaction enhances E2-dependent replication and transcription activation. Interacts with protein L2; this interaction inhibits E2 transcriptional activity but not DNA replication function E2. Interacts with protein E7; this interaction inhibits E7 oncogenic activity. Interacts with host TAF1; this interaction modulates E2-dependent transcriptional regulation. Interacts with host BRD4; this interaction mediates E2 transcriptional activation function. Additionally, the interaction with host BRD4 on mitotic chromosomes mediates tethering of the viral genome. Interacts with host TOPBP1; this interaction is required for optimal viral DNA replication. In terms of processing, phosphorylated.

It localises to the host nucleus. Functionally, plays a role in the initiation of viral DNA replication. A dimer of E2 interacts with a dimer of E1 in order to improve specificity of E1 DNA binding activity. Once the complex recognizes and binds DNA at specific sites, the E2 dimer is removed from DNA. E2 also regulates viral transcription through binding to the E2RE response element (5'-ACCNNNNNNGGT-3') present in multiple copies in the regulatory regions of the viral genome. Activates or represses transcription depending on E2RE's position with regards to proximal promoter elements including the TATA-box. Repression occurs by sterically hindering the assembly of the transcription initiation complex. This chain is Regulatory protein E2, found in Human papillomavirus 17.